Reading from the N-terminus, the 720-residue chain is Connector enhancer of kinase suppressor of ras 1 (720 aa).

Residues W7 to L70 enclose the SAM domain. Residues N78–A164 enclose the CRIC domain. In terms of domain architecture, PDZ spans K196–P285. A disordered region spans residues P285–R390. The span at R304 to A317 shows a compositional bias: low complexity. Phosphoserine occurs at positions 307 and 314. Over residues E348–I359 the composition is skewed to pro residues. A compositionally biased stretch (basic residues) spans V379 to R390. A PH domain is found at R403 to S502. The tract at residues Y504–S573 is disordered. The segment covering C518–E530 has biased composition (acidic residues). A compositionally biased stretch (low complexity) spans S533–P546. Residues P553–D571 are compositionally biased toward polar residues. The stretch at Q615–D646 forms a coiled coil. Residues Q676–L720 are disordered. Over residues E678–S695 the composition is skewed to polar residues.

It belongs to the CNKSR family. In terms of assembly, interacts with RHO and RALGDS. In terms of processing, phosphorylated on tyrosine.

Its subcellular location is the cytoplasm. The protein localises to the membrane. In terms of biological role, may function as an adapter protein or regulator of Ras signaling pathways. This Homo sapiens (Human) protein is Connector enhancer of kinase suppressor of ras 1 (CNKSR1).